Consider the following 131-residue polypeptide: Protein GLUTAMINE DUMPER 5 (131 aa).

Residues 1-34 (MRQFPSIRGNINEKMMTTMVESQTRSPWRTPVPY) lie on the Extracellular side of the membrane. Residues 35-55 (LFGGLAAMLGLIAFALLLLAC) form a helical membrane-spanning segment. The Cytoplasmic segment spans residues 56-131 (SYWRLSRQTE…GESKVTEENH (76 aa)). Positions 88-92 (VIMAG) match the VIMAG motif.

The protein belongs to the GLUTAMINE DUMPER 1 (TC 9.B.60) family. Expressed in the vascular tissues. Also detected in guard cells.

The protein localises to the membrane. Functionally, probable subunit of an amino acid transporter involved in the regulation of the amino acid metabolism. Stimulates amino acid export by activating nonselective amino acid facilitators. The sequence is that of Protein GLUTAMINE DUMPER 5 (GDU5) from Arabidopsis thaliana (Mouse-ear cress).